We begin with the raw amino-acid sequence, 588 residues long: Aspartate--tRNA ligase (588 aa).

Glu-172 is an L-aspartate binding site. The interval 196 to 199 (QLFK) is aspartate. Position 218 (Arg-218) interacts with L-aspartate. ATP is bound by residues 218–220 (RDE) and Gln-227. His-449 lines the L-aspartate pocket. Glu-483 provides a ligand contact to ATP. L-aspartate is bound at residue Arg-490. 535 to 538 (GLDR) contacts ATP.

Belongs to the class-II aminoacyl-tRNA synthetase family. Type 1 subfamily. In terms of assembly, homodimer.

It is found in the cytoplasm. The enzyme catalyses tRNA(Asp) + L-aspartate + ATP = L-aspartyl-tRNA(Asp) + AMP + diphosphate. Functionally, catalyzes the attachment of L-aspartate to tRNA(Asp) in a two-step reaction: L-aspartate is first activated by ATP to form Asp-AMP and then transferred to the acceptor end of tRNA(Asp). This chain is Aspartate--tRNA ligase, found in Haemophilus influenzae (strain 86-028NP).